A 378-amino-acid polypeptide reads, in one-letter code: MANQPSIAERRTKVWEPYIRAKLGFRNHWYPVRLASEIAEGTPVPVKLLGEKILLNRVGGKVYAIQDRCLHRGVTLSDRVECYSKNTISCWYHGWTYRWDDGRLVDILTNPGSVQIGRRALKTFPVEEAKGLIFVYVGDGEPTPLIEDVPPGFLDENRAIHGQHRLVASNWRLGAENGFDAGHVLIHKNSILVKGNDIILPLGFAPGDPDQLTRSEVAAGKPKGVYDLLGEHSVPVFEGMIEGKPAIHGNIGSKRVAISISIWLPGVLKVEPWPDPELTQFEWYVPVDETSHLYFQTLGKVVTSKEAADSFEREFHEKWVGLALNGFNDDDIMARESMEPFYTDDRGWSEEILFEPDRAIIEWRGLASQHNRGIQEAR.

One can recognise a Rieske domain in the interval 29–135 (WYPVRLASEI…VEEAKGLIFV (107 aa)). [2Fe-2S] cluster is bound by residues C69, H71, C90, and H93.

As to quaternary structure, homotrimer. Carbazole 1,9a-dioxygenase complex consists of a terminal oxygenase component CarAa, a ferredoxin reductase component fdr and a ferredoxin component CarAc. Requires [2Fe-2S] cluster as cofactor.

The enzyme catalyses 9H-carbazole + NADH + O2 + H(+) = 2'-aminobiphenyl-2,3-diol + NAD(+). It catalyses the reaction 9H-carbazole + NADPH + O2 + H(+) = 2'-aminobiphenyl-2,3-diol + NADP(+). Functionally, part of the multicomponent carbazole 1,9a-dioxygenase (CARDO), that converts carbazole (CAR) into 2-aminobiphenyl-2,3-diol. Catalyzes the dioxygenation at the angular (C-9a) and adjacent (C-1) positions of carbazole to yield a highly unstable cis-hydrodiol intermediate which is spontaneously converted to 2-aminobiphenyl-2,3-diol. This chain is Carbazole 1,9a-dioxygenase, terminal oxygenase component CarAa (carAa), found in Sphingomonas sp.